The chain runs to 287 residues: ATP synthase gamma chain (287 aa).

The protein belongs to the ATPase gamma chain family. F-type ATPases have 2 components, CF(1) - the catalytic core - and CF(0) - the membrane proton channel. CF(1) has five subunits: alpha(3), beta(3), gamma(1), delta(1), epsilon(1). CF(0) has three main subunits: a, b and c.

Its subcellular location is the cell membrane. Its function is as follows. Produces ATP from ADP in the presence of a proton gradient across the membrane. The gamma chain is believed to be important in regulating ATPase activity and the flow of protons through the CF(0) complex. In Staphylococcus carnosus (strain TM300), this protein is ATP synthase gamma chain.